The primary structure comprises 127 residues: Protein yippee-like 4 (127 aa).

Residues 27–124 form the Yippee domain; the sequence is RTYSCVHCRA…IEMSHMVKDN (98 aa). Zn(2+)-binding residues include C31, C34, C87, and C90. Phosphothreonine occurs at positions 92 and 93. Y98 is modified (phosphotyrosine).

The protein belongs to the yippee family.

It is found in the nucleus. Its subcellular location is the nucleolus. The sequence is that of Protein yippee-like 4 (YPEL4) from Chlorocebus aethiops (Green monkey).